The following is a 504-amino-acid chain: Maturase K (504 aa).

It belongs to the intron maturase 2 family. MatK subfamily.

The protein resides in the plastid. Its subcellular location is the chloroplast. Functionally, usually encoded in the trnK tRNA gene intron. Probably assists in splicing its own and other chloroplast group II introns. In Aucuba japonica (Japanese laurel), this protein is Maturase K.